The primary structure comprises 548 residues: Chaperonin GroEL (548 aa).

ATP is bound by residues 30–33 (TLGP), lysine 51, 87–91 (DGTTT), glycine 415, and aspartate 495.

The protein belongs to the chaperonin (HSP60) family. Forms a cylinder of 14 subunits composed of two heptameric rings stacked back-to-back. Interacts with the co-chaperonin GroES.

It localises to the cytoplasm. It carries out the reaction ATP + H2O + a folded polypeptide = ADP + phosphate + an unfolded polypeptide.. Its function is as follows. Together with its co-chaperonin GroES, plays an essential role in assisting protein folding. The GroEL-GroES system forms a nano-cage that allows encapsulation of the non-native substrate proteins and provides a physical environment optimized to promote and accelerate protein folding. This Erwinia tasmaniensis (strain DSM 17950 / CFBP 7177 / CIP 109463 / NCPPB 4357 / Et1/99) protein is Chaperonin GroEL.